Here is a 1020-residue protein sequence, read N- to C-terminus: Protein SCAR3 (1020 aa).

Disordered stretches follow at residues 167–198, 351–382, and 802–827; these read NLSQ…DMSR, DEKP…LRKR, and DYLS…GRKE. The segment covering 174 to 191 has biased composition (basic residues); sequence KFQKDKKHCKMKKKKTSS. Residues 365 to 382 are compositionally biased toward basic and acidic residues; that stretch reads FHSKDNENDKSESGLRKR. Residues 802 to 814 are compositionally biased toward polar residues; sequence DYLSDNHSLSNSE. The WH2 domain occupies 954 to 972; sequence ETGDFLQQIRTQQFNLRPV.

This sequence belongs to the SCAR/WAVE family. As to quaternary structure, binds BRK1. Interacts with SPK1, ABI1, ABI2, ABI3 and ABI4. As to expression, expressed in expanding cotyledons, expanding leaves and expanding siliques containing developing embryos. Detected in unopened flower buds. Reduced expression in mature leaves and mature cotyledons.

Its subcellular location is the cytoplasm. It localises to the cytoskeleton. In terms of biological role, involved in regulation of actin and microtubule organization. Part of a WAVE complex that activates the Arp2/3 complex. Regulates trichome branch positioning and expansion. The protein is Protein SCAR3 (SCAR3) of Arabidopsis thaliana (Mouse-ear cress).